The sequence spans 709 residues: Polyribonucleotide nucleotidyltransferase (709 aa).

Mg(2+)-binding residues include D489 and D495. Residues 556–615 (PKIDMIKIDVDKIKVVIGKGGETIDKIIAETGVKIDIDEEGNVSIFSSDQAAIDRTKDII) form the KH domain. An S1 motif domain is found at 625 to 693 (GEVYHAKVVR…DKGRVDASMK (69 aa)).

Belongs to the polyribonucleotide nucleotidyltransferase family. It depends on Mg(2+) as a cofactor.

It localises to the cytoplasm. The catalysed reaction is RNA(n+1) + phosphate = RNA(n) + a ribonucleoside 5'-diphosphate. Functionally, involved in mRNA degradation. Catalyzes the phosphorolysis of single-stranded polyribonucleotides processively in the 3'- to 5'-direction. The polypeptide is Polyribonucleotide nucleotidyltransferase (Streptococcus agalactiae serotype Ia (strain ATCC 27591 / A909 / CDC SS700)).